The chain runs to 246 residues: Ribonuclease 3 (246 aa).

Residues 16–146 enclose the RNase III domain; sequence ATELEAGIGY…LLAAVYLDGG (131 aa). Glu-59 lines the Mg(2+) pocket. Asp-63 is a catalytic residue. Residues Asn-132 and Glu-135 each coordinate Mg(2+). The active site involves Glu-135. The DRBM domain occupies 173–242; sequence DFKTEFQEMV…ARQVLARFAA (70 aa).

Belongs to the ribonuclease III family. Homodimer. The cofactor is Mg(2+).

The protein resides in the cytoplasm. It catalyses the reaction Endonucleolytic cleavage to 5'-phosphomonoester.. Its function is as follows. Digests double-stranded RNA. Involved in the processing of primary rRNA transcript to yield the immediate precursors to the large and small rRNAs (23S and 16S). Processes some mRNAs, and tRNAs when they are encoded in the rRNA operon. Processes pre-crRNA and tracrRNA of type II CRISPR loci if present in the organism. This chain is Ribonuclease 3, found in Geobacter metallireducens (strain ATCC 53774 / DSM 7210 / GS-15).